Here is a 1381-residue protein sequence, read N- to C-terminus: DNA-directed RNA polymerase subunit beta'' (1381 aa).

Residues Cys-224, Cys-295, Cys-302, and Cys-305 each contribute to the Zn(2+) site.

The protein belongs to the RNA polymerase beta' chain family. RpoC2 subfamily. As to quaternary structure, in plastids the minimal PEP RNA polymerase catalytic core is composed of four subunits: alpha, beta, beta', and beta''. When a (nuclear-encoded) sigma factor is associated with the core the holoenzyme is formed, which can initiate transcription. Zn(2+) serves as cofactor.

It localises to the plastid. The protein resides in the chloroplast. It catalyses the reaction RNA(n) + a ribonucleoside 5'-triphosphate = RNA(n+1) + diphosphate. Functionally, DNA-dependent RNA polymerase catalyzes the transcription of DNA into RNA using the four ribonucleoside triphosphates as substrates. This chain is DNA-directed RNA polymerase subunit beta'', found in Lactuca sativa (Garden lettuce).